We begin with the raw amino-acid sequence, 732 residues long: Interleukin-31 receptor subunit alpha (732 aa).

The first 19 residues, 1–19 (MMWTWALWMLPSLCKFSLA), serve as a signal peptide directing secretion. Residues 20–519 (ALPAKPENIS…FKTLSFSVFE (500 aa)) are Extracellular-facing. Fibronectin type-III domains lie at 24 to 122 (KPEN…IAKT), 124 to 225 (PPKI…TEEE), 223 to 315 (EEEA…PVAT), 319 to 416 (PAIQ…QAYA), and 421 to 515 (PSEG…TLSF). N37, N67, N93, N166, N187, N277, N283, N395, N455, and N504 each carry an N-linked (GlcNAc...) asparagine glycan. The chain crosses the membrane as a helical span at residues 520-540 (IILITSLIGGGLLILIILTVA). The Cytoplasmic segment spans residues 541 to 732 (YGLKKPNKLT…KLPEHTKGEV (192 aa)).

Belongs to the type I cytokine receptor family. Type 2 subfamily. In terms of assembly, heterodimer with OSMR. Interacts with JAK1 and STAT3. Post-translationally, N-glycosylated. In terms of tissue distribution, expressed in CD14- and CD56-positive blood cells. Expressed in macrophages. Expressed in keratinocytes. Expressed in a subset of dorsal root ganglia neurons (at protein level). Expressed at low levels in testis, ovary, brain, prostate, placenta, thymus, bone marrow, trachea and skin. Expressed in bronchial and alveolar epithelial cells and pulmonary fibroblasts. Detected in all of the myelomonocytic lineage. Isoform 6: Expressed at higher levels in lesional skin compared to healthy skin of atopic dermatitis patients.

Its subcellular location is the cell membrane. The protein resides in the presynaptic cell membrane. The protein localises to the cell projection. It is found in the axon. In terms of biological role, associates with OSMR to form the interleukin-31 receptor which activates STAT3 and to a lower extent STAT1 and STAT5. May function in skin immunity. Mediates IL31-induced itch, probably in a manner dependent on cation channels TRPA1 and TRPV1. Positively regulates numbers and cycling status of immature subsets of myeloid progenitor cells in bone marrow in vivo and enhances myeloid progenitor cell survival in vitro. In Homo sapiens (Human), this protein is Interleukin-31 receptor subunit alpha (IL31RA).